We begin with the raw amino-acid sequence, 917 residues long: ABC transporter A family member 12 (917 aa).

The next 6 helical transmembrane spans lie at 34–54, 323–343, 377–397, 409–429, 435–455, and 508–528; these read LILVPLFLCLILLAIQQVLDA, IASLLGPLFFTWVVLLLFPVI, FLTISMLYVISLVGFGSAIGL, FVFYFIYSNLQISLAFLVSSI, TVTVIAYILVYGTGLLGSFLF, and GEVFCIMSVEWFLALIVAYYI. The region spanning 595–832 is the ABC transporter domain; the sequence is ILCDNLKKVY…YGGSYVFTMT (238 aa). 633 to 640 is an ATP binding site; that stretch reads GPNGAGKT.

Belongs to the ABC transporter superfamily. ABCA family. CPR flippase (TC 3.A.1.211) subfamily.

The protein resides in the membrane. The chain is ABC transporter A family member 12 (ABCA12) from Arabidopsis thaliana (Mouse-ear cress).